The following is a 529-amino-acid chain: Bifunctional purine biosynthesis protein PurH (529 aa).

An MGS-like domain is found at 1-148 (MNNVRPIRRA…KNHKDTTIVV (148 aa)).

It belongs to the PurH family.

The enzyme catalyses (6R)-10-formyltetrahydrofolate + 5-amino-1-(5-phospho-beta-D-ribosyl)imidazole-4-carboxamide = 5-formamido-1-(5-phospho-D-ribosyl)imidazole-4-carboxamide + (6S)-5,6,7,8-tetrahydrofolate. It catalyses the reaction IMP + H2O = 5-formamido-1-(5-phospho-D-ribosyl)imidazole-4-carboxamide. Its pathway is purine metabolism; IMP biosynthesis via de novo pathway; 5-formamido-1-(5-phospho-D-ribosyl)imidazole-4-carboxamide from 5-amino-1-(5-phospho-D-ribosyl)imidazole-4-carboxamide (10-formyl THF route): step 1/1. It participates in purine metabolism; IMP biosynthesis via de novo pathway; IMP from 5-formamido-1-(5-phospho-D-ribosyl)imidazole-4-carboxamide: step 1/1. The polypeptide is Bifunctional purine biosynthesis protein PurH (Shewanella frigidimarina (strain NCIMB 400)).